A 305-amino-acid chain; its full sequence is Methionyl-tRNA formyltransferase (305 aa).

108–111 (SLLP) lines the (6S)-5,6,7,8-tetrahydrofolate pocket.

Belongs to the Fmt family.

It catalyses the reaction L-methionyl-tRNA(fMet) + (6R)-10-formyltetrahydrofolate = N-formyl-L-methionyl-tRNA(fMet) + (6S)-5,6,7,8-tetrahydrofolate + H(+). Functionally, attaches a formyl group to the free amino group of methionyl-tRNA(fMet). The formyl group appears to play a dual role in the initiator identity of N-formylmethionyl-tRNA by promoting its recognition by IF2 and preventing the misappropriation of this tRNA by the elongation apparatus. The protein is Methionyl-tRNA formyltransferase of Thermus thermophilus (strain ATCC 27634 / DSM 579 / HB8).